Consider the following 170-residue polypeptide: MATQDSQGIKLFGKTIAFNTRTIKNEEETHPPEQEATIAVRSSSSSDLTAEKRPDKIIACPRCKSMETKFCYFNNYNVNQPRHFCKGCHRYWTAGGALRNVPVGAGRRKSKPPGRVVVGMLGDGNGVRQVELINGLLVEEWQHAAAAAHGSFRHDFPMKRLRCYSDGQSC.

The tract at residues 25–51 is disordered; it reads NEEETHPPEQEATIAVRSSSSSDLTAE. The segment at 58–112 adopts a Dof-type zinc-finger fold; sequence IACPRCKSMETKFCYFNNYNVNQPRHFCKGCHRYWTAGGALRNVPVGAGRRKSKP. C60, C63, C85, and C88 together coordinate Zn(2+).

In terms of tissue distribution, expressed in the vasculature of cotyledons and hypocotyls, leaves and roots.

The protein resides in the nucleus. Functionally, transcription factor that binds specifically to a 5'-AA[AG]G-3' consensus core sequence. Transcriptional repressor of 'CONSTANS' expression. Regulates a photoperiodic flowering response. In Arabidopsis thaliana (Mouse-ear cress), this protein is Cyclic dof factor 4 (CDF4).